A 438-amino-acid chain; its full sequence is V-type ATP synthase beta chain (438 aa).

This sequence belongs to the ATPase alpha/beta chains family.

Its function is as follows. Produces ATP from ADP in the presence of a proton gradient across the membrane. The V-type beta chain is a regulatory subunit. The protein is V-type ATP synthase beta chain of Chlamydia felis (strain Fe/C-56) (Chlamydophila felis).